A 1917-amino-acid polypeptide reads, in one-letter code: Diacylglycerol kinase eta (1917 aa).

The span at 1–10 shows a compositional bias: basic and acidic residues; it reads MSHLKLDTLH. The segment at 1 to 37 is disordered; sequence MSHLKLDTLHVQRSPRGSRRSSRSSGRSSACSSGSIS. Positions 23–37 are enriched in low complexity; it reads RSSGRSSACSSGSIS. One can recognise a PH domain in the interval 82 to 175; sequence AIIKEGFLLK…WLGSLKTATA (94 aa). 2 Phorbol-ester/DAG-type zinc fingers span residues 195-245 and 268-319; these read HHHW…IANC and PHQW…AVAC. The DAGKc domain maps to 350 to 486; sequence GNFSPLLVFV…DRWSIMVFEK (137 aa). Disordered regions lie at residues 1015 to 1053, 1114 to 1149, and 1380 to 1399; these read TTLC…PPRI, LEQQ…SEDE, and KDKD…EETN. Residues 1128–1145 show a composition bias toward polar residues; sequence PEQQQTPTNKGPNSLATT. An SAM domain is found at 1854-1917; sequence WSVNEVVTWL…LQAIKDLSEN (64 aa).

The protein belongs to the eukaryotic diacylglycerol kinase family.

The protein resides in the cytoplasm. The catalysed reaction is a 1,2-diacyl-sn-glycerol + ATP = a 1,2-diacyl-sn-glycero-3-phosphate + ADP + H(+). In terms of biological role, phosphorylates diacylglycerol (DAG) to generate phosphatidic acid (PA). The protein is Diacylglycerol kinase eta of Drosophila yakuba (Fruit fly).